The primary structure comprises 351 residues: Photosystem II D2 protein (351 aa).

Residues 39 to 59 (TAYLAIGGWLTGTTFVTSWYT) traverse the membrane as a helical segment. Histidine 116 is a chlorophyll a binding site. Residues 123–139 (GFMLRQFELARLIGIRP) traverse the membrane as a helical segment. The pheophytin a site is built by glutamine 128 and asparagine 141. The helical transmembrane segment at 151 to 164 (VFVSVFLLYPLGQS) threads the bilayer. Histidine 196 contacts chlorophyll a. A helical transmembrane segment spans residues 206–226 (GALLSAIHGVTVENTLYEDGE). Histidine 213 and phenylalanine 260 together coordinate a plastoquinone. Histidine 213 contacts Fe cation. Histidine 267 contacts Fe cation. A helical transmembrane segment spans residues 277–293 (GLWTSSIGIIGLALNLR).

This sequence belongs to the reaction center PufL/M/PsbA/D family. PSII is composed of 1 copy each of membrane proteins PsbA, PsbB, PsbC, PsbD, PsbE, PsbF, PsbH, PsbI, PsbJ, PsbK, PsbL, PsbM, PsbT, PsbX, PsbY, PsbZ, Psb30/Ycf12, peripheral proteins PsbO, CyanoQ (PsbQ), PsbU, PsbV and a large number of cofactors. It forms dimeric complexes. The D1/D2 heterodimer binds P680, chlorophylls that are the primary electron donor of PSII, and subsequent electron acceptors. It shares a non-heme iron and each subunit binds pheophytin, quinone, additional chlorophylls, carotenoids and lipids. There is also a Cl(-1) ion associated with D1 and D2, which is required for oxygen evolution. The PSII complex binds additional chlorophylls, carotenoids and specific lipids. is required as a cofactor.

It is found in the host cellular thylakoid membrane. The enzyme catalyses 2 a plastoquinone + 4 hnu + 2 H2O = 2 a plastoquinol + O2. Functionally, photosystem II (PSII) is a light-driven water:plastoquinone oxidoreductase that uses light energy to abstract electrons from H(2)O, generating O(2) and a proton gradient subsequently used for ATP formation. It consists of a core antenna complex that captures photons, and an electron transfer chain that converts photonic excitation into a charge separation. The D1/D2 (PsbA/PsbD) reaction center heterodimer binds P680, the primary electron donor of PSII as well as several subsequent electron acceptors. D2 is needed for assembly of a stable PSII complex. The protein is Photosystem II D2 protein (psbD) of Synechococcus.